The chain runs to 332 residues: Glycerol-3-phosphate dehydrogenase [NAD(P)+] (332 aa).

NADPH is bound by residues S11, F12, K32, and K106. Sn-glycerol 3-phosphate-binding residues include K106, G137, and S139. A141 contacts NADPH. The sn-glycerol 3-phosphate site is built by K192, D245, S255, R256, and N257. Catalysis depends on K192, which acts as the Proton acceptor. An NADPH-binding site is contributed by R256. Residues V280 and E282 each coordinate NADPH.

It belongs to the NAD-dependent glycerol-3-phosphate dehydrogenase family.

Its subcellular location is the cytoplasm. It catalyses the reaction sn-glycerol 3-phosphate + NAD(+) = dihydroxyacetone phosphate + NADH + H(+). The enzyme catalyses sn-glycerol 3-phosphate + NADP(+) = dihydroxyacetone phosphate + NADPH + H(+). It functions in the pathway membrane lipid metabolism; glycerophospholipid metabolism. In terms of biological role, catalyzes the reduction of the glycolytic intermediate dihydroxyacetone phosphate (DHAP) to sn-glycerol 3-phosphate (G3P), the key precursor for phospholipid synthesis. The sequence is that of Glycerol-3-phosphate dehydrogenase [NAD(P)+] from Staphylococcus aureus (strain USA300).